The following is a 125-amino-acid chain: Small ribosomal subunit protein bS6 (125 aa).

The protein belongs to the bacterial ribosomal protein bS6 family.

Functionally, binds together with bS18 to 16S ribosomal RNA. The sequence is that of Small ribosomal subunit protein bS6 from Baumannia cicadellinicola subsp. Homalodisca coagulata.